A 215-amino-acid chain; its full sequence is Cytochrome b6 (215 aa).

The helical transmembrane segment at 32–52 (IFYCLGGITLVCFLIQFATGF) threads the bilayer. Cysteine 35 contacts heme c. The heme b site is built by histidine 86 and histidine 100. 3 consecutive transmembrane segments (helical) span residues 90-110 (ASMM…TGGF), 116-136 (LTWV…VTGY), and 186-206 (AHTF…FLMI). Positions 187 and 202 each coordinate heme b.

This sequence belongs to the cytochrome b family. PetB subfamily. In terms of assembly, the 4 large subunits of the cytochrome b6-f complex are cytochrome b6, subunit IV (17 kDa polypeptide, PetD), cytochrome f and the Rieske protein, while the 4 small subunits are PetG, PetL, PetM and PetN. The complex functions as a dimer. Requires heme b as cofactor. Heme c is required as a cofactor.

It localises to the cellular thylakoid membrane. Component of the cytochrome b6-f complex, which mediates electron transfer between photosystem II (PSII) and photosystem I (PSI), cyclic electron flow around PSI, and state transitions. The chain is Cytochrome b6 from Trichormus variabilis (strain ATCC 29413 / PCC 7937) (Anabaena variabilis).